A 644-amino-acid chain; its full sequence is MADPEGTNGAGMGCTGWFEVEAVIERRTGDNISEDEDETADDSGTDLLEFIDDSMENSIQADTEAARALFNIQEGEDDLNAVCALKRKFAACSQSAAEDVVDRAANPCRTSINKNKECTYRKRKIDELEDSGYGNTEVETQQMVQQVESQNGDTNLNDLESSGVGDDSEVSCETNVDSCENVTLQEISNVLHSSNTKANILYKFKEAYGISFMELVRPFKSDKTSCTDWCITGYGISPSVAESLKVLIKQHSLYTHLQCLTCDRGIIILLLIRFRCSKNRLTVAKLMSNLLSIPETCMVIEPPKLRSQTCALYWFRTAMSNISDVQGTTPEWIDRLTVLQHSFNDNIFDLSEMVQWAYDNELTDDSDIAYYYAQLADSNSNAAAFLKSNSQAKIVKDCGIMCRHYKKAEKRKMSIGQWIQSRCEKTNDGGNWRPIVQLLRYQNIEFTAFLGAFKKFLKGIPKKSCMLICGPANTGKSYFGMSLIQFLKGCVISCVNSKSHFWLQPLSDAKIGMIDDVTPISWTYIDDYMRNALDGNEISIDVKHRALVQLKCPPLLLTSNTNAGTDSRWPYLHSRLTVFEFKNPFPFDENGNPVYAINDENWKSFFSRTWCKLDLIEEEDKENHGGNISTFKCSAGENTRSLRS.

Residues 86–88 carry the Nuclear localization signal motif; sequence KRK. The DNA-binding region stretch occupies residues 179 to 345; the sequence is CENVTLQEIS…LTVLQHSFND (167 aa). Residues 312–644 are required for E2 binding; it reads LYWFRTAMSN…AGENTRSLRS (333 aa). One can recognise an SF3 helicase domain in the interval 444–594; it reads IEFTAFLGAF…FPFDENGNPV (151 aa). 470 to 477 is a binding site for ATP; it reads GPANTGKS. A Glycyl lysine isopeptide (Lys-Gly) (interchain with G-Cter in SUMO) cross-link involves residue K551.

This sequence belongs to the papillomaviridae E1 protein family. In terms of assembly, can form hexamers. Interacts with E2 protein; this interaction increases E1 DNA binding specificity. Interacts with host DNA polymerase subunit POLA2. Interacts with host single stranded DNA-binding protein RPA1. Interacts with host TOP1; this interaction stimulates the enzymatic activity of TOP1. Post-translationally, phosphorylated. Sumoylated.

Its subcellular location is the host nucleus. The enzyme catalyses Couples ATP hydrolysis with the unwinding of duplex DNA by translocating in the 3'-5' direction.. It catalyses the reaction ATP + H2O = ADP + phosphate + H(+). Functionally, ATP-dependent DNA 3'-5' helicase required for initiation of viral DNA replication. It forms a complex with the viral E2 protein. The E1-E2 complex binds to the replication origin which contains binding sites for both proteins. During the initial step, a dimer of E1 interacts with a dimer of protein E2 leading to a complex that binds the viral origin of replication with high specificity. Then, a second dimer of E1 displaces the E2 dimer in an ATP-dependent manner to form the E1 tetramer. Following this, two E1 monomers are added to each half of the site, which results in the formation of two E1 trimers on the viral ori. Subsequently, two hexamers will be created. The double hexamer acts as a bi-directional helicase machinery and unwinds the viral DNA and then recruits the host DNA polymerase to start replication. The polypeptide is Replication protein E1 (Human papillomavirus 33).